The sequence spans 417 residues: Tryptophan synthase beta chain (417 aa).

An N6-(pyridoxal phosphate)lysine modification is found at lysine 99.

This sequence belongs to the TrpB family. As to quaternary structure, tetramer of two alpha and two beta chains. Requires pyridoxal 5'-phosphate as cofactor.

The enzyme catalyses (1S,2R)-1-C-(indol-3-yl)glycerol 3-phosphate + L-serine = D-glyceraldehyde 3-phosphate + L-tryptophan + H2O. It participates in amino-acid biosynthesis; L-tryptophan biosynthesis; L-tryptophan from chorismate: step 5/5. The beta subunit is responsible for the synthesis of L-tryptophan from indole and L-serine. The polypeptide is Tryptophan synthase beta chain (Corynebacterium glutamicum (strain R)).